Reading from the N-terminus, the 167-residue chain is General odorant-binding protein 1 (167 aa).

The N-terminal stretch at 1–22 is a signal peptide; the sequence is MAHTLQTVVLLLGTSILHPILA. 3 disulfide bridges follow: C41–C76, C72–C130, and C119–C139.

It belongs to the PBP/GOBP family. As to expression, antenna.

Present in the aqueous fluid surrounding olfactory sensory dendrites and are thought to aid in the capture and transport of hydrophobic odorants into and through this fluid. This is General odorant-binding protein 1 from Antheraea pernyi (Chinese oak silk moth).